A 414-amino-acid polypeptide reads, in one-letter code: MPTRPARSGLHSLAQLLRSDVVGGFLLIGGALTALIWANSPFGHVYEALRSFSFGPEALHLHLTVEAWVADGLLAIFFFVVGNELKQEFVHGELRNPRRAMLPIVAAVCGMAVPALIYAAFNAGDPARLPGWGIPMATDIAFAVAILAVVGRHLPSPLRTFLLTLAIVDDLGAIIVIAVFYTASLSFLPLIGAGMLLAVFGYLQRGRGVAARLNSAALPNWVVYLPLAGVIWALVHASGVHATIAGVAMGLLMRTVPLAGEKESPSHRLAHLLGPWSSGLVLPVFAVMSAGVVFAGGLGAVLDDTAALGIIAGLVVGKTVGIAGGSWVTTKLTAAELSPALRWIDITGMALLAGIGFTVSLLITDLSFPDYPEALVHAKAGVLLASLLATVLGAVVLAVRNAHYRKLRQAVSPQ.

11 helical membrane-spanning segments follow: residues 22–42 (VGGF…NSPF), 61–81 (LHLT…FFVV), 101–121 (MLPI…YAAF), 131–151 (GWGI…AVVG), 171–191 (LGAI…LPLI), 215–235 (SAAL…WALV), 239–259 (GVHA…VPLA), 281–301 (VLPV…LGAV), 308–328 (LGII…GSWV), 343–363 (WIDI…SLLI), and 379–399 (KAGV…VLAV).

This sequence belongs to the NhaA Na(+)/H(+) (TC 2.A.33) antiporter family.

The protein resides in the cell membrane. It catalyses the reaction Na(+)(in) + 2 H(+)(out) = Na(+)(out) + 2 H(+)(in). Na(+)/H(+) antiporter that extrudes sodium in exchange for external protons. The protein is Na(+)/H(+) antiporter NhaA of Thermobifida fusca (strain YX).